The primary structure comprises 195 residues: Shikimate kinase (195 aa).

Position 21 to 26 (21 to 26 (GTGKTS)) interacts with ATP. Mg(2+) is bound at residue Thr25. Positions 43, 67, and 89 each coordinate substrate. Positions 128–148 (REQRPSFSGKASTEISEETMR) are disordered. Residue Arg131 participates in ATP binding. Residues 132–141 (PSFSGKASTE) show a composition bias toward polar residues. Residue Arg158 participates in substrate binding.

This sequence belongs to the shikimate kinase family. In terms of assembly, monomer. Mg(2+) is required as a cofactor.

Its subcellular location is the cytoplasm. It carries out the reaction shikimate + ATP = 3-phosphoshikimate + ADP + H(+). It participates in metabolic intermediate biosynthesis; chorismate biosynthesis; chorismate from D-erythrose 4-phosphate and phosphoenolpyruvate: step 5/7. Its function is as follows. Catalyzes the specific phosphorylation of the 3-hydroxyl group of shikimic acid using ATP as a cosubstrate. This chain is Shikimate kinase, found in Syntrophus aciditrophicus (strain SB).